Reading from the N-terminus, the 381-residue chain is MESIGIVAPQKMHFTEPLPLQNGSSLAGYDLMVETYGTLNAARSNAVLVCHALNASHHVAGVYADNPRDIGWWDNMVGPGKPLDTDKFFVIGVNNLGSCFGSTGPMSIDPSTGNPYGATFPVVTVEDWVNAQARVADQFGITRFAAVMGGSLGGMQALAWSMMYPERVAHCIVVASTPKLSAQNIAFNEVARSAILSDPDFHGGNYYAHNVKPKRGLRVARMIGHITYLSDDDMAEKFGRSLRRAEGALDAYNFNFDVEFEVESYLRYQGDKFADYFDANTYLLITRALDYFDPAKAFAGDLTAAVAHTTAKYLIASFTTDWRFAPARSRELVKALLDHKRTVTYAEIDAPHGHDAFLLDDARYHNLMRAYYERIANEVNA.

The region spanning 45–360 (NAVLVCHALN…PHGHDAFLLD (316 aa)) is the AB hydrolase-1 domain. The Nucleophile role is filled by Ser151. A substrate-binding site is contributed by Arg221. Residues Asp321 and His354 contribute to the active site. Asp355 lines the substrate pocket.

It belongs to the AB hydrolase superfamily. MetX family. As to quaternary structure, homodimer.

It is found in the cytoplasm. The enzyme catalyses L-homoserine + succinyl-CoA = O-succinyl-L-homoserine + CoA. It participates in amino-acid biosynthesis; L-methionine biosynthesis via de novo pathway; O-succinyl-L-homoserine from L-homoserine: step 1/1. Its function is as follows. Transfers a succinyl group from succinyl-CoA to L-homoserine, forming succinyl-L-homoserine. The polypeptide is Homoserine O-succinyltransferase (Paraburkholderia xenovorans (strain LB400)).